Here is a 271-residue protein sequence, read N- to C-terminus: 4-diphosphocytidyl-2-C-methyl-D-erythritol kinase (271 aa).

The active site involves K17. 97 to 107 contacts ATP; that stretch reads PVGSGLGGGSS. D137 is a catalytic residue.

The protein belongs to the GHMP kinase family. IspE subfamily.

The enzyme catalyses 4-CDP-2-C-methyl-D-erythritol + ATP = 4-CDP-2-C-methyl-D-erythritol 2-phosphate + ADP + H(+). The protein operates within isoprenoid biosynthesis; isopentenyl diphosphate biosynthesis via DXP pathway; isopentenyl diphosphate from 1-deoxy-D-xylulose 5-phosphate: step 3/6. In terms of biological role, catalyzes the phosphorylation of the position 2 hydroxy group of 4-diphosphocytidyl-2C-methyl-D-erythritol. In Thermotoga maritima (strain ATCC 43589 / DSM 3109 / JCM 10099 / NBRC 100826 / MSB8), this protein is 4-diphosphocytidyl-2-C-methyl-D-erythritol kinase.